The following is a 359-amino-acid chain: tRNA N6-adenosine threonylcarbamoyltransferase (359 aa).

Residues His115 and His119 each coordinate Fe cation. Residues 137–141 (LVSGG), Asp170, Gly183, and Asn283 contribute to the substrate site. Asp311 serves as a coordination point for Fe cation. Residues 328–359 (APDSLDIAPRSRWPLDEKSAPVFGTGRRGAKA) form a disordered region.

This sequence belongs to the KAE1 / TsaD family. It depends on Fe(2+) as a cofactor.

The protein resides in the cytoplasm. It carries out the reaction L-threonylcarbamoyladenylate + adenosine(37) in tRNA = N(6)-L-threonylcarbamoyladenosine(37) in tRNA + AMP + H(+). In terms of biological role, required for the formation of a threonylcarbamoyl group on adenosine at position 37 (t(6)A37) in tRNAs that read codons beginning with adenine. Is involved in the transfer of the threonylcarbamoyl moiety of threonylcarbamoyl-AMP (TC-AMP) to the N6 group of A37, together with TsaE and TsaB. TsaD likely plays a direct catalytic role in this reaction. The polypeptide is tRNA N6-adenosine threonylcarbamoyltransferase (Brucella suis (strain ATCC 23445 / NCTC 10510)).